The chain runs to 498 residues: MASQGTKRSYEQMETGGERQNATEIRASVGRMVGGIGRFYIQMCTELKLSDYEGRLIQNSITIERMILSAFDERRNKYLEEHPSAGKDPKKTGGPIYRRRDGKWMRELILYDKEEIRRIWRQANNGEDATAGLTHLMIWHSNLNDATYQRTRALVRTGMDPRMCSLMQGSTLPRRSGAAGAAVKGVGTMVMELIRMIKRGINDRNFWRGENGRRTRIAYERMCNILKGKFQTAAQRAMMDQVRESRNPGNAEIEDLIFLARSALILRGSVAHKSCLPACVYGLAVASGYDFEREGYSLVGIDPFRLLQNSQVFSLIRPNENPAHKSQLVWMACHSAAFEDLRVSSFIRGTRVVPRGQMSTRGVQIASNENMETMDSSTLELRSRYWAIRTRSGGNTNQQRASAGQISVQPTFSVQRNLPFERATIMAAFTGNTEGRTSDMRTEIIRMMENARPEDVSFQGRGVFELSDEKATNPIVPSFDMSNEGSYFFGDNAEEYDN.

The Unconventional nuclear localization signal motif lies at 1–18; sequence MASQGTKRSYEQMETGGE. Residues 1–21 form a disordered region; the sequence is MASQGTKRSYEQMETGGERQN. The short motif at 198-216 is the Bipartite nuclear localization signal element; the sequence is KRGINDRNFWRGENGRRTR.

Belongs to the influenza viruses nucleoprotein family. Homomultimerizes to form the nucleocapsid. May bind host exportin-1/XPO1. Binds to viral genomic RNA. Protein-RNA contacts are mediated by a combination of electrostatic interactions between positively charged residues and the phosphate backbone and planar interactions between aromatic side chains and bases. Post-translationally, late in virus-infected cells, may be cleaved from a 56-kDa protein to a 53-kDa protein by a cellular caspase. This cleavage might be a marker for the onset of apoptosis in infected cells or have a specific function in virus host interaction.

It is found in the virion. Its subcellular location is the host nucleus. Its function is as follows. Encapsidates the negative strand viral RNA, protecting it from nucleases. The encapsidated genomic RNA is termed the ribonucleoprotein (RNP) and serves as template for transcription and replication. The RNP needs to be localized in the host nucleus to start an infectious cycle, but is too large to diffuse through the nuclear pore complex. NP comprises at least 2 nuclear localization signals that are responsible for the active RNP import into the nucleus through cellular importin alpha/beta pathway. Later in the infection, nclear export of RNPs are mediated through viral proteins NEP interacting with M1 which binds nucleoproteins. It is possible that nucleoprotein binds directly host exportin-1/XPO1 and plays an active role in RNPs nuclear export. M1 interaction with RNP seems to hide nucleoprotein's nuclear localization signals. Soon after a virion infects a new cell, M1 dissociates from the RNP under acidification of the virion driven by M2 protein. Dissociation of M1 from RNP unmasks nucleoprotein's nuclear localization signals, targeting the RNP to the nucleus. This chain is Nucleoprotein, found in Anatidae (waterfowl).